Reading from the N-terminus, the 220-residue chain is MMKCLFLLCLCLLPIVVFSSTFTSQNLIDLPSESPLPKPVLDTNGKELNPDSSYRIISIGRGALGGDVYLGKSPNSDAPCPDGVFRYNSDVGPSGTPVRFIPLSGGIFEDQLLNIQFNIPTVKLCVSYTIWKVGNLNAYFRTMLLETGGTIGQADSSYFKIVKLSNFGYNLLYCPITPPFLCPFCRDDNFCAKVGVVIQNGKRRLALVNENPLDVLFQEV.

The first 23 residues, 1–23 (MMKCLFLLCLCLLPIVVFSSTFT), serve as a signal peptide directing secretion. The propeptide occupies 24 to 32 (SQNLIDLPS). Cystine bridges form between C80–C125 and C174–C185.

This sequence belongs to the protease inhibitor I3 (leguminous Kunitz-type inhibitor) family.

It is found in the vacuole. Functionally, inhibitor of cathepsin D (aspartic protease) and trypsin (serine protease). May protect the plant by inhibiting proteases of invading organisms. The chain is Aspartic protease inhibitor 8 from Solanum tuberosum (Potato).